Here is a 205-residue protein sequence, read N- to C-terminus: MALHMVLVVLSLLPLLEAQNPEPANITLGIPITNETLKWLSDKWFYMGAAFRDPVFKQAVQTIQTEYFYLTPNLINDTIELREFQTTDDQCVYNFTHLGVQRENGTLSKCAGAVKIFAHLIVLKKHGTFMLAFNLTDENRGLSFYAKKPDLSPELRKIFQQAVKDVGMDESEIVFVDWTKDKCSEQQKQQLELEKETKKETKKDP.

Positions 1 to 18 (MALHMVLVVLSLLPLLEA) are cleaved as a signal peptide. N-linked (GlcNAc...) asparagine glycans are attached at residues N25, N34, N76, N94, N104, and N134. The cysteines at positions 91 and 183 are disulfide-linked.

It belongs to the calycin superfamily. Lipocalin family.

It localises to the secreted. Functionally, functions as a transport protein in the blood stream. Binds various ligands in the interior of its beta-barrel domain. Appears to function in modulating the activity of the immune system during the acute-phase reaction. The chain is Alpha-1-acid glycoprotein (Orm1) from Rattus norvegicus (Rat).